The chain runs to 141 residues: Large ribosomal subunit protein uL11 (141 aa).

The interval Met1–Pro23 is disordered.

This sequence belongs to the universal ribosomal protein uL11 family. Part of the ribosomal stalk of the 50S ribosomal subunit. Interacts with L10 and the large rRNA to form the base of the stalk. L10 forms an elongated spine to which L12 dimers bind in a sequential fashion forming a multimeric L10(L12)X complex. One or more lysine residues are methylated.

Its function is as follows. Forms part of the ribosomal stalk which helps the ribosome interact with GTP-bound translation factors. The chain is Large ribosomal subunit protein uL11 from Rhodopirellula baltica (strain DSM 10527 / NCIMB 13988 / SH1).